The chain runs to 247 residues: Phosphonates import ATP-binding protein PhnC (247 aa).

The region spanning 5–246 (IEVKNLVKNY…EDDIRKVYQT (242 aa)) is the ABC transporter domain. 37–44 (GESGAGKS) contributes to the ATP binding site.

Belongs to the ABC transporter superfamily. Phosphonates importer (TC 3.A.1.9.1) family. The complex is composed of two ATP-binding proteins (PhnC), two transmembrane proteins (PhnE) and a solute-binding protein (PhnD).

The protein resides in the cell inner membrane. It carries out the reaction phosphonate(out) + ATP + H2O = phosphonate(in) + ADP + phosphate + H(+). Its function is as follows. Part of the ABC transporter complex PhnCDE involved in phosphonates import. Responsible for energy coupling to the transport system. This Fusobacterium nucleatum subsp. nucleatum (strain ATCC 25586 / DSM 15643 / BCRC 10681 / CIP 101130 / JCM 8532 / KCTC 2640 / LMG 13131 / VPI 4355) protein is Phosphonates import ATP-binding protein PhnC.